Consider the following 448-residue polypeptide: RING finger protein 44 (448 aa).

The RING-type; atypical zinc-finger motif lies at 396-437 (CVVCFSDFESRQLLRVLPCNHEFHAKCVDKWLKTNRTCPICR).

This Danio rerio (Zebrafish) protein is RING finger protein 44 (rnf44).